The chain runs to 201 residues: Pyridoxal 5'-phosphate synthase subunit PdxT (201 aa).

48–50 (GES) serves as a coordination point for L-glutamine. Cysteine 80 (nucleophile) is an active-site residue. L-glutamine is bound by residues arginine 109 and 137-138 (IR). Residues histidine 180 and glutamate 182 each act as charge relay system in the active site.

The protein belongs to the glutaminase PdxT/SNO family. In terms of assembly, in the presence of PdxS, forms a dodecamer of heterodimers. Only shows activity in the heterodimer.

It carries out the reaction aldehydo-D-ribose 5-phosphate + D-glyceraldehyde 3-phosphate + L-glutamine = pyridoxal 5'-phosphate + L-glutamate + phosphate + 3 H2O + H(+). It catalyses the reaction L-glutamine + H2O = L-glutamate + NH4(+). The protein operates within cofactor biosynthesis; pyridoxal 5'-phosphate biosynthesis. Catalyzes the hydrolysis of glutamine to glutamate and ammonia as part of the biosynthesis of pyridoxal 5'-phosphate. The resulting ammonia molecule is channeled to the active site of PdxS. The sequence is that of Pyridoxal 5'-phosphate synthase subunit PdxT from Cutibacterium acnes (strain DSM 16379 / KPA171202) (Propionibacterium acnes).